A 464-amino-acid polypeptide reads, in one-letter code: Fumarate hydratase class II (464 aa).

Residues 97–99 (SGT), 128–131 (HPND), 138–140 (SSN), and Thr-186 each bind substrate. Residue His-187 is the Proton donor/acceptor of the active site. The active site involves Ser-317. Residues Ser-318 and 323–325 (KVN) each bind substrate.

The protein belongs to the class-II fumarase/aspartase family. Fumarase subfamily. Homotetramer.

The protein resides in the cytoplasm. It catalyses the reaction (S)-malate = fumarate + H2O. Its pathway is carbohydrate metabolism; tricarboxylic acid cycle; (S)-malate from fumarate: step 1/1. Functionally, involved in the TCA cycle. Catalyzes the stereospecific interconversion of fumarate to L-malate. This Leptospira interrogans serogroup Icterohaemorrhagiae serovar copenhageni (strain Fiocruz L1-130) protein is Fumarate hydratase class II.